A 295-amino-acid chain; its full sequence is Very long chain fatty acid elongase 5 (295 aa).

7 helical membrane passes run 26-46 (WLLLDNYVPTIFFTALYLFIV), 64-84 (ILVVYNLGLTLLSFYMFYELV), 112-132 (VLWWYYFSKLIEFMDTFFFIL), 150-170 (MLNIWWFVMNWVPCGHSFFGA), 172-192 (LNSFIHVLMYSYYGLSAIPAI), 207-223 (LTQFVLTMTQTTCAMIW), and 227-247 (FPMGWLYFQNSYMISLIILFT). The disordered stretch occupies residues 265–295 (YQNGSASAVNGYTNSFSSLEDNVKQRKQRQN). A compositionally biased stretch (polar residues) spans 266 to 284 (QNGSASAVNGYTNSFSSLE).

Belongs to the ELO family. ELOVL5 subfamily.

It is found in the endoplasmic reticulum membrane. The protein resides in the cell projection. The protein localises to the dendrite. The enzyme catalyses a very-long-chain acyl-CoA + malonyl-CoA + H(+) = a very-long-chain 3-oxoacyl-CoA + CO2 + CoA. The catalysed reaction is (6Z,9Z,12Z)-octadecatrienoyl-CoA + malonyl-CoA + H(+) = (8Z,11Z,14Z)-3-oxoeicosatrienoyl-CoA + CO2 + CoA. It catalyses the reaction (9Z,12Z,15Z)-octadecatrienoyl-CoA + malonyl-CoA + H(+) = (11Z,14Z,17Z)-3-oxoeicosatrienoyl-CoA + CO2 + CoA. It carries out the reaction (9Z)-hexadecenoyl-CoA + malonyl-CoA + H(+) = 3-oxo-(11Z)-octadecenoyl-CoA + CO2 + CoA. The enzyme catalyses (9Z)-octadecenoyl-CoA + malonyl-CoA + H(+) = 3-oxo-(11Z)-eicosenoyl-CoA + CO2 + CoA. The catalysed reaction is (11Z)-octadecenoyl-CoA + malonyl-CoA + H(+) = 3-oxo-(13Z)-eicosenoyl-CoA + CO2 + CoA. It catalyses the reaction (9Z,12Z)-octadecadienoyl-CoA + malonyl-CoA + H(+) = (11Z,14Z)-3-oxoicosa-11,14-dienoyl-CoA + CO2 + CoA. It carries out the reaction (6Z,9Z,12Z,15Z)-octadecatetraenoyl-CoA + malonyl-CoA + H(+) = (8Z,11Z,14Z,17Z)-3-oxoicosatetraenoyl-CoA + CO2 + CoA. The enzyme catalyses (5Z,8Z,11Z,14Z)-eicosatetraenoyl-CoA + malonyl-CoA + H(+) = (7Z,10Z,13Z,16Z)-3-oxodocosatetraenoyl-CoA + CO2 + CoA. The catalysed reaction is (5Z,8Z,11Z,14Z,17Z)-eicosapentaenoyl-CoA + malonyl-CoA + H(+) = 3-oxo-(7Z,10Z,13Z,16Z,19Z)-docosapentaenoyl-CoA + CO2 + CoA. It participates in lipid metabolism; polyunsaturated fatty acid biosynthesis. Catalyzes the first and rate-limiting reaction of the four reactions that constitute the long-chain fatty acids elongation cycle. This endoplasmic reticulum-bound enzymatic process allows the addition of 2 carbons to the chain of long- and very long-chain fatty acids (VLCFAs) per cycle. Condensing enzyme that acts specifically toward polyunsaturated acyl-CoA with the higher activity toward C18:3(n-6) acyl-CoA. May participate in the production of monounsaturated and of polyunsaturated VLCFAs of different chain lengths that are involved in multiple biological processes as precursors of membrane lipids and lipid mediators. In conditions where the essential linoleic and alpha linoleic fatty acids are lacking it is also involved in the synthesis of Mead acid from oleic acid. This chain is Very long chain fatty acid elongase 5, found in Xenopus laevis (African clawed frog).